The chain runs to 2171 residues: Mediator of DNA damage checkpoint protein 1 (2171 aa).

The span at 1-19 (MEDTQAIDWDVEEEEETEQ) shows a compositional bias: acidic residues. A disordered region spans residues 1 to 22 (MEDTQAIDWDVEEEEETEQSSE). An interaction with CHEK2 region spans residues 1–150 (MEDTQAIDWD…SRGPLTVEET (150 aa)). Residues 2–220 (EDTQAIDWDV…PFAFNLNSDT (219 aa)) form an interaction with the MRN complex region. A Phosphothreonine modification is found at Thr4. The region spanning 54–105 (NVVGRMPDCSVALPFPSISKQHAEIEILAWDKAPILRDCGSLNGTQILRPPK) is the FHA domain. Position 108 is a phosphoserine (Ser108). Residues 145–568 (LTVEETPRVQ…PAKLLVVSLE (424 aa)) are required for nuclear localization (NLS1). At Thr146 the chain carries Phosphothreonine. Residues Ser168, Ser176, Ser196, and Ser218 each carry the phosphoserine modification. Disordered regions lie at residues 185–248 (RTTS…AKQS) and 261–317 (DQPL…AEVH). Thr220 is modified (phosphothreonine). Residues 261-278 (DQPLVKERDDDTKVKRGA) are compositionally biased toward basic and acidic residues. Ser299 is subject to Phosphoserine. Phosphothreonine is present on Thr301. A compositionally biased stretch (basic and acidic residues) spans 306–317 (DSRPPGRPAEVH). The residue at position 329 (Ser329) is a Phosphoserine. Thr331 is subject to Phosphothreonine. The disordered stretch occupies residues 355–387 (GVGTRGPGAPGLAHLQESQAGSDTDVEEGKAPQ). Phosphoserine is present on residues Ser372 and Ser376. A Phosphothreonine modification is found at Thr378. Phosphoserine occurs at positions 394, 397, and 402. Thr404 carries the phosphothreonine modification. Ser411 carries the phosphoserine modification. Disordered stretches follow at residues 443–469 (QRSQTTTERDSDTDVEEEELPVENREA) and 481–522 (VRAH…VDIN). Thr449 is subject to Phosphothreonine. Ser453 carries the post-translational modification Phosphoserine. The residue at position 455 (Thr455) is a Phosphothreonine. Phosphoserine is present on residues Ser485, Ser495, Ser498, Ser504, Ser505, and Ser513. The span at 513-522 (SQASTTVDIN) shows a compositional bias: polar residues. Thr523 bears the Phosphothreonine mark. The residue at position 590 (Ser590) is a Phosphoserine. Lys616 is covalently cross-linked (Glycyl lysine isopeptide (Lys-Gly) (interchain with G-Cter in SUMO1); alternate). Lys616 participates in a covalent cross-link: Glycyl lysine isopeptide (Lys-Gly) (interchain with G-Cter in SUMO2); alternate. Disordered stretches follow at residues 653-689 (DTLGESTQPQREGAQVPTGREREQHVGGTKDSEDNYG) and 780-1969 (SPPR…TKLN). Residues 671-685 (GREREQHVGGTKDSE) are compositionally biased toward basic and acidic residues. A phosphoserine mark is found at Ser780 and Ser793. An N6-acetyllysine modification is found at Lys812. Basic and acidic residues-rich tracts occupy residues 819–844 (ETAERVGPERGPLERETEKLLPERQT), 851–862 (ELTKGKQDREQK), 868–905 (DTQRQESDKNGESASPERDRESLKVEIETSEEIQEKQV), and 914–951 (AFEREVERPVANRECDPAELEEKVPKVILERDTQRGEP). Residues Ser955 and Ser998 each carry the phosphoserine modification. The span at 955 to 964 (SQDQKGQASS) shows a compositional bias: polar residues. Positions 1016 to 1031 (KASRIRAAEKVSRGDQ) are enriched in basic and acidic residues. Phosphoserine is present on Ser1033. Residues 1040–1051 (PTVPEAPAPPQK) are compositionally biased toward pro residues. Ser1068 and Ser1086 each carry phosphoserine. Residues 1103-1113 (PKPKIRTRKSS) are compositionally biased toward basic residues. Polar residues-rich tracts occupy residues 1129 to 1157 (PSTSTAQPVTPKPTSQATRSRTNRSSVKT) and 1170 to 1187 (PCTSTDQPVTSEPTSQVT). Residues 1148 to 1692 (SRTNRSSVKT…TNRSSVKTPE (545 aa)) form an interaction with the PRKDC complex region. Thr1157 carries the post-translational modification Phosphothreonine. Position 1198 is a phosphothreonine (Thr1198). The segment covering 1210-1227 (QPSTSTDRPVTSEPTSHA) has biased composition (polar residues). At Ser1235 the chain carries Phosphoserine. Residue Thr1239 is modified to Phosphothreonine. Residues 1251 to 1268 (QPSTSTDQPVTSEPTYQA) show a composition bias toward polar residues. 2 positions are modified to phosphothreonine: Thr1280 and Thr1302. Positions 1306–1318 (TSRTTRSRTNMSS) are enriched in low complexity. 2 stretches are compositionally biased toward polar residues: residues 1334–1350 (PSTSTEQPVTPEPTSRA) and 1375–1403 (PSTSTDQPVTPEPTSQATRGRTNRSSVKT). The segment covering 1429–1441 (TSRTTRSRTNMSS) has biased composition (low complexity). Polar residues predominate over residues 1457 to 1473 (PSTSTEQPVTPEPTSRA). Residues Ser1481 and Ser1482 each carry the phosphoserine modification. Lys1484 bears the N6-acetyllysine mark. Thr1485 is modified (phosphothreonine). Lys1495 is covalently cross-linked (Glycyl lysine isopeptide (Lys-Gly) (interchain with G-Cter in SUMO1); alternate). Lys1495 participates in a covalent cross-link: Glycyl lysine isopeptide (Lys-Gly) (interchain with G-Cter in SUMO2); alternate. 3 stretches are compositionally biased toward polar residues: residues 1498–1526 (PSTSTDQPVTPEPTSQATRGRTNRSSVKT), 1538–1557 (QPSTSTDQPVTPEPTSQVTR), and 1580–1596 (ASASTDQPVTSEPTSRT). Phosphothreonine is present on residues Thr1507 and Thr1548. Residues Thr1615 and Thr1630 each carry the phosphothreonine modification. 2 stretches are compositionally biased toward polar residues: residues 1620–1649 (QPSTSTDQPVTPEPTSQATRGRTNRSSVKT) and 1661–1678 (QPSTSRNQLVTPEPTSRA). Residue Ser1646 is modified to Phosphoserine. Phosphothreonine is present on residues Thr1649 and Thr1671. Phosphoserine is present on Ser1686. Phosphothreonine is present on Thr1690. Residues 1693-1702 (PVVPTAPEPH) show a composition bias toward pro residues. Positions 1706-1718 (STDQPVTPKLTSR) are enriched in polar residues. Phosphothreonine is present on residues Thr1712, Thr1746, and Thr1753. Polar residues predominate over residues 1760 to 1771 (GGQSKTLRSSTV). The residue at position 1763 (Ser1763) is a Phosphoserine. Thr1779 carries the phosphothreonine modification. Positions 1780–1801 (PEFQSPVTTDQPISPEPITQPS) are enriched in polar residues. A required for nuclear localization (NLS2) region spans residues 1780 to 2171 (PEFQSPVTTD…VLSPLEMSST (392 aa)). Ser1784 and Ser1793 each carry phosphoserine. Residue Lys1822 forms a Glycyl lysine isopeptide (Lys-Gly) (interchain with G-Cter in SUMO2) linkage. Phosphoserine is present on Ser1857. A Glycyl lysine isopeptide (Lys-Gly) (interchain with G-Cter in SUMO2) cross-link involves residue Lys1872. Thr1882 is modified (phosphothreonine). Position 1902 is a phosphoserine (Ser1902). Positions 1905-1918 (HQKQPQRGEVSQKT) are enriched in polar residues. Lys1922 is covalently cross-linked (Glycyl lysine isopeptide (Lys-Gly) (interchain with G-Cter in SUMO1); alternate). Lys1922 is covalently cross-linked (Glycyl lysine isopeptide (Lys-Gly) (interchain with G-Cter in SUMO2); alternate). The span at 1929–1939 (AEKPGKEEDVV) shows a compositional bias: basic and acidic residues. Position 1940 is a phosphothreonine (Thr1940). BRCT domains follow at residues 1974–2052 (APKV…EYVV) and 2073–2164 (RERR…FVLS). At Arg2025 the chain carries Omega-N-methylarginine.

In terms of assembly, homodimer. Interacts with H2AX, which requires phosphorylation of H2AX on 'Ser-139'. Interacts with the MRN complex, composed of MRE11, RAD50, and NBN. Interacts with CHEK2, which requires ATM-mediated phosphorylation of 'Thr-68' within the FHA domain of CHEK2. Interacts constitutively with the BRCA1-BARD1 complex, SMC1A and TP53BP1. Interacts with ATM and FANCD2, and these interactions are reduced upon DNA damage. Also interacts with the PRKDC complex, composed of XRCC6/KU70, XRCC5/KU80 and PRKDC/XRCC7. This interaction may be required for PRKDC autophosphorylation, which is essential for DNA double strand break (DSB) repair. When phosphorylated by ATM, interacts with RNF8 (via FHA domain). Interacts with CEP164. When phosphorylated, interacts with APTX (via FHA-like domain). Interacts (when phosphorylated) with TOPBP1; promoting TOPBP1 localization to DNA damage sites during mitosis. Interacts (when phosphorylated) with NBN; promoting NBN and MRN complex localization to DNA damage sites. Phosphorylated upon exposure to ionizing radiation (IR), ultraviolet radiation (UV), and hydroxyurea (HU). Phosphorylation in response to IR requires ATM, NBN, and possibly CHEK2. Also phosphorylated during the G2/M phase of the cell cycle and during activation of the mitotic spindle checkpoint. Phosphorylation at Thr-4 by ATM stabilizes and enhances homodimerization via the FHA domain. Phosphorylated at Ser-168 and Ser-196 by CK2 in response to DNA damage during mitosis, promoting interaction with TOPBP1. Phosphorylated by CK2 in response to DNA damage, promoting interaction with NBN and recruitment of the MRN complex to DNA damage sites. Post-translationally, sumoylation at Lys-1922 by PIAS4 following DNA damage promotes ubiquitin-mediated degradation. In terms of processing, ubiquitinated by RNF4, leading to proteasomal degradation; undergoes 'Lys-48'-linked polyubiquitination.

The protein localises to the nucleus. It localises to the chromosome. Histone reader protein required for checkpoint-mediated cell cycle arrest in response to DNA damage within both the S phase and G2/M phases of the cell cycle. Specifically recognizes and binds histone H2AX phosphorylated at 'Ser-139', a marker of DNA damage, serving as a scaffold for the recruitment of DNA repair and signal transduction proteins to discrete foci of DNA damage sites. Also required for downstream events subsequent to the recruitment of these proteins. These include phosphorylation and activation of the ATM, CHEK1 and CHEK2 kinases, and stabilization of TP53/p53 and apoptosis. ATM and CHEK2 may also be activated independently by a parallel pathway mediated by TP53BP1. Required for chromosomal stability during mitosis by promoting recruitment of TOPBP1 to DNA double strand breaks (DSBs): TOPBP1 forms filamentous assemblies that bridge MDC1 and tether broken chromosomes during mitosis. Required for the repair of DSBs via homologous recombination by promoting recruitment of NBN component of the MRN complex to DSBs. The sequence is that of Mediator of DNA damage checkpoint protein 1 (MDC1) from Pan troglodytes (Chimpanzee).